The sequence spans 554 residues: Suppressor of hairless homolog (554 aa).

The disordered stretch occupies residues M1–N31. DNA-binding regions lie at residues K83–R90, R218–R227, and R291–Y323. The 91-residue stretch at P381 to T471 folds into the IPT/TIG domain. The tract at residues G489 to S554 is disordered. Over residues D508–D519 the composition is skewed to basic and acidic residues.

It belongs to the Su(H) family. Interacts with activated Notch proteins.

It is found in the nucleus. Its function is as follows. Transcriptional regulator that plays a central role in Notch signaling, a signaling pathway involved in cell-cell communication that regulates a broad spectrum of cell-fate determinations. Acts as a transcriptional repressor when it is not associated with Notch proteins. When associated with some Notch protein, it acts as a transcriptional activator that activates transcription of Notch target genes. Required for the transcriptional expression of Brachyury, suggesting that it participates in notochord differentiation. The polypeptide is Suppressor of hairless homolog (Su(H)) (Ciona intestinalis (Transparent sea squirt)).